The chain runs to 1482 residues: Type VII secretion system protein EssC (1482 aa).

Residues 1 to 229 lie on the Cytoplasmic side of the membrane; sequence MHKLIIKYNK…RPPQPIQKNN (229 aa). A helical transmembrane segment spans residues 230-252; that stretch reads TVIWRSIIPPLVMIALTVVIFLV. At 253 to 256 the chain is on the extracellular side; the sequence is RPIG. A helical membrane pass occupies residues 257–279; the sequence is IYILMMIGMSTVTIVFGITTYFS. Residues 280–1482 are Cytoplasmic-facing; it reads EKKKYNKDVE…EYQKIKLMEG (1203 aa). FtsK domains follow at residues 652–846 and 997–1183; these read DDIL…QDSN and QGPM…NELT. ATP is bound by residues 672–679 and 1014–1021; these read GTTGSGKS and GSPGYGRT.

Belongs to the EssC family. As to quaternary structure, homooligomer. Interacts with EsaE.

The protein resides in the cell membrane. Functionally, component of the type VII secretion system (Ess). Required for the secretion of substrates including EsxA and EsxB. However, unable to support secretion of the substrate protein EsxC. The polypeptide is Type VII secretion system protein EssC (Staphylococcus aureus (strain MRSA252)).